The chain runs to 92 residues: Protein S100-A12 (92 aa).

EF-hand domains follow at residues 13–48 (NIFHQYSVRVGHFDTLNKRELKQLITKELPKTLQNT) and 49–84 (KDQPTIDKIFQDLDADKDGAVSFEEFVVLVSRVLKT). His-16 is a binding site for Cu cation. Residue His-16 coordinates Zn(2+). Ser-19 and His-24 together coordinate Ca(2+). Asp-26 contributes to the Cu cation binding site. Asp-26 is a Zn(2+) binding site. Residues Thr-27 and Glu-32 each contribute to the Ca(2+) site. The interval 38–53 (TKELPKTLQNTKDQPT) is hinge domain. Asp-62, Asp-64, Asp-66, and Glu-73 together coordinate Ca(2+). His-86 and His-90 together coordinate Cu cation. Residues His-86 and His-90 each coordinate Zn(2+).

This sequence belongs to the S-100 family. Homodimer. Homooligomer (tetramer or hexamer) in the presence of calcium, zinc and copper ions. Interacts with AGER and both calcium and zinc are essential for the interaction. Interacts with CACYBP in a calcium-dependent manner. In terms of tissue distribution, up-regulated in stimulated inflammatory effector cells.

The protein resides in the secreted. It is found in the cytoplasm. It localises to the cytoskeleton. The protein localises to the cell membrane. S100A12 is a calcium-, zinc- and copper-binding protein which plays a prominent role in the regulation of inflammatory processes and immune response. Its pro-inflammatory activity involves recruitment of leukocytes, promotion of cytokine and chemokine production, and regulation of leukocyte adhesion and migration. Acts as an alarmin or a danger associated molecular pattern (DAMP) molecule and stimulates innate immune cells via binding to receptor for advanced glycation endproducts (AGER). Binding to AGER activates the MAP-kinase and NF-kappa-B signaling pathways leading to production of pro-inflammatory cytokines and up-regulation of cell adhesion molecules ICAM1 and VCAM1. Acts as a monocyte and mast cell chemoattractant. Can stimulate mast cell degranulation and activation which generates chemokines, histamine and cytokines inducing further leukocyte recruitment to the sites of inflammation. Can inhibit the activity of matrix metalloproteinases; MMP2, MMP3 and MMP9 by chelating Zn(2+) from their active sites. The polypeptide is Protein S100-A12 (S100A12) (Bos taurus (Bovine)).